The following is a 77-amino-acid chain: Conotoxin ArMKLT2-022 (77 aa).

Positions 1–22 (MKLTCVLIVAVLFLTACQLIAA) are cleaved as a signal peptide. Residues 23-46 (DDSRDLKRFSRRKMRDGMLNTKNT) constitute a propeptide that is removed on maturation. Residue glutamine 49 is modified to Pyrrolidone carboxylic acid. 3 disulfides stabilise this stretch: cysteine 50–cysteine 65, cysteine 57–cysteine 68, and cysteine 64–cysteine 73.

It belongs to the conotoxin O1 superfamily. Expressed by the venom duct.

It localises to the secreted. The sequence is that of Conotoxin ArMKLT2-022 from Conus arenatus (Sand-dusted cone).